The primary structure comprises 61 residues: Photosystem II reaction center protein K (61 aa).

A propeptide spanning residues 1-24 (MLNIFSLICICLNSALYSSNFFFA) is cleaved from the precursor. A helical membrane pass occupies residues 40–60 (MPVIPLFFFLLAFVWQAAVSF).

The protein belongs to the PsbK family. As to quaternary structure, PSII is composed of 1 copy each of membrane proteins PsbA, PsbB, PsbC, PsbD, PsbE, PsbF, PsbH, PsbI, PsbJ, PsbK, PsbL, PsbM, PsbT, PsbX, PsbY, PsbZ, Psb30/Ycf12, at least 3 peripheral proteins of the oxygen-evolving complex and a large number of cofactors. It forms dimeric complexes.

The protein resides in the plastid. It localises to the chloroplast thylakoid membrane. Functionally, one of the components of the core complex of photosystem II (PSII). PSII is a light-driven water:plastoquinone oxidoreductase that uses light energy to abstract electrons from H(2)O, generating O(2) and a proton gradient subsequently used for ATP formation. It consists of a core antenna complex that captures photons, and an electron transfer chain that converts photonic excitation into a charge separation. This Vitis vinifera (Grape) protein is Photosystem II reaction center protein K.